A 206-amino-acid polypeptide reads, in one-letter code: NADH-quinone oxidoreductase subunit C (206 aa).

The protein belongs to the complex I 30 kDa subunit family. In terms of assembly, NDH-1 is composed of 14 different subunits. Subunits NuoB, C, D, E, F, and G constitute the peripheral sector of the complex.

Its subcellular location is the cell inner membrane. It catalyses the reaction a quinone + NADH + 5 H(+)(in) = a quinol + NAD(+) + 4 H(+)(out). NDH-1 shuttles electrons from NADH, via FMN and iron-sulfur (Fe-S) centers, to quinones in the respiratory chain. The immediate electron acceptor for the enzyme in this species is believed to be ubiquinone. Couples the redox reaction to proton translocation (for every two electrons transferred, four hydrogen ions are translocated across the cytoplasmic membrane), and thus conserves the redox energy in a proton gradient. The protein is NADH-quinone oxidoreductase subunit C of Nitrosomonas europaea (strain ATCC 19718 / CIP 103999 / KCTC 2705 / NBRC 14298).